We begin with the raw amino-acid sequence, 207 residues long: Cytidylyl-2-hydroxypropylphosphonate hydrolase (207 aa).

CDP-binding residues include tryptophan 68, arginine 74, glutamine 76, and serine 77. Asparagine 109, aspartate 125, glutamate 127, and aspartate 129 together coordinate a divalent metal cation. Lysine 142 lines the CDP pocket. Lysine 142 serves as the catalytic Proton donor. Aspartate 143 serves as a coordination point for a divalent metal cation.

This sequence belongs to the FomD family. Requires Mn(2+) as cofactor. It depends on Co(2+) as a cofactor.

The enzyme catalyses cytidine 5'-({hydroxy[(S)-2-hydroxypropyl]phosphonoyl}phosphate) + H2O = (S)-2-hydroxypropylphosphonate + CMP + H(+). Its pathway is antibiotic biosynthesis; fosfomycin biosynthesis. With respect to regulation, hydrolysis of (S)-HPP-CMP is inhibited by CDP. Involved in fosfomycin biosynthesis. Catalyzes the hydrolysis of cytidylyl (S)-2-hydroxypropylphosphonate ((S)-HPP-CMP) to give (S)-2-hydroxypropylphosphonate ((S)-HPP) and CMP. Can also hydrolyze (R)-HPP-CMP and cytidylyl 2-hydroxyethylphosphonate (HEP-CMP), which is a biosynthetic intermediate before C-methylation, but the catalytic efficiency is much higher with (S)-HPP-CMP. This chain is Cytidylyl-2-hydroxypropylphosphonate hydrolase, found in Streptomyces fradiae (Streptomyces roseoflavus).